A 152-amino-acid chain; its full sequence is Glutamyl-tRNA(Gln) amidotransferase subunit F, mitochondrial (152 aa).

The protein belongs to the GatF family. As to quaternary structure, subunit of the heterotrimeric GatFAB amidotransferase (AdT) complex, composed of A, B and F subunits.

It localises to the mitochondrion inner membrane. It catalyses the reaction L-glutamyl-tRNA(Gln) + L-glutamine + ATP + H2O = L-glutaminyl-tRNA(Gln) + L-glutamate + ADP + phosphate + H(+). Its function is as follows. Allows the formation of correctly charged Gln-tRNA(Gln) through the transamidation of misacylated Glu-tRNA(Gln) in the mitochondria. The reaction takes place in the presence of glutamine and ATP through an activated gamma-phospho-Glu-tRNA(Gln). Required for proper protein synthesis within the mitochondrion. This is Glutamyl-tRNA(Gln) amidotransferase subunit F, mitochondrial from Komagataella phaffii (strain GS115 / ATCC 20864) (Yeast).